The primary structure comprises 299 residues: Release factor glutamine methyltransferase (299 aa).

S-adenosyl-L-methionine contacts are provided by residues 134-138 (GTGSG), Asp157, Trp186, and Asn203. 203–206 (NPPY) contributes to the substrate binding site.

It belongs to the protein N5-glutamine methyltransferase family. PrmC subfamily.

The catalysed reaction is L-glutaminyl-[peptide chain release factor] + S-adenosyl-L-methionine = N(5)-methyl-L-glutaminyl-[peptide chain release factor] + S-adenosyl-L-homocysteine + H(+). Its function is as follows. Methylates the class 1 translation termination release factors RF1/PrfA and RF2/PrfB on the glutamine residue of the universally conserved GGQ motif. The polypeptide is Release factor glutamine methyltransferase (Synechocystis sp. (strain ATCC 27184 / PCC 6803 / Kazusa)).